Consider the following 142-residue polypeptide: Large ribosomal subunit protein bL17 (142 aa).

It belongs to the bacterial ribosomal protein bL17 family. Part of the 50S ribosomal subunit. Contacts protein L32.

The polypeptide is Large ribosomal subunit protein bL17 (Bartonella henselae (strain ATCC 49882 / DSM 28221 / CCUG 30454 / Houston 1) (Rochalimaea henselae)).